The chain runs to 302 residues: Probable alpha-L-glutamate ligase 1 (302 aa).

Positions 104-287 (MQLLSRKGIG…VANMIIEFIE (184 aa)) constitute an ATP-grasp domain. ATP contacts are provided by residues lysine 141, 178-179 (EY), aspartate 187, and 211-213 (RSN). The Mg(2+) site is built by aspartate 248, glutamate 260, and asparagine 262. Mn(2+)-binding residues include aspartate 248, glutamate 260, and asparagine 262.

Belongs to the RimK family. Requires Mg(2+) as cofactor. It depends on Mn(2+) as a cofactor.

This Pseudoalteromonas atlantica (strain T6c / ATCC BAA-1087) protein is Probable alpha-L-glutamate ligase 1.